The sequence spans 331 residues: Major outer membrane protein P.IB (331 aa).

The first 19 residues, 1 to 19 (MKKSLIALTLAALPVAAMA), serve as a signal peptide directing secretion.

This sequence belongs to the Gram-negative porin family. As to quaternary structure, homotrimer.

Its subcellular location is the cell outer membrane. Serves as a slightly cation selective porin. This Neisseria meningitidis serogroup B protein is Major outer membrane protein P.IB (porB).